Here is a 391-residue protein sequence, read N- to C-terminus: GTPase Obg (391 aa).

The region spanning 1–159 (MKFVDEAVVK…REIRLELLLL (159 aa)) is the Obg domain. The OBG-type G domain maps to 160-333 (ADVGMLGLPN…LCYKLADFME (174 aa)). GTP-binding positions include 166–173 (GLPNAGKS), 191–195 (FTTLI), 213–216 (DIPG), 283–286 (NKTD), and 314–316 (SAI). Residues serine 173 and threonine 193 each coordinate Mg(2+). The segment covering 367 to 383 (TEEDDDDWDDCDDEDDD) has biased composition (acidic residues). The disordered stretch occupies residues 367 to 391 (TEEDDDDWDDCDDEDDDGHVVYVRD).

The protein belongs to the TRAFAC class OBG-HflX-like GTPase superfamily. OBG GTPase family. As to quaternary structure, monomer. The cofactor is Mg(2+).

It is found in the cytoplasm. Functionally, an essential GTPase which binds GTP, GDP and possibly (p)ppGpp with moderate affinity, with high nucleotide exchange rates and a fairly low GTP hydrolysis rate. Plays a role in control of the cell cycle, stress response, ribosome biogenesis and in those bacteria that undergo differentiation, in morphogenesis control. The chain is GTPase Obg from Vibrio campbellii (strain ATCC BAA-1116).